The primary structure comprises 190 residues: MLLSDRDLRAEITAGRLGIEPFDDALVQPSSIDVRLDCMFRVFNNTRYTHIDPAKQQDELTSLVEPQDGEPFVLHPGEFVLGSTLELITLPDDLAGRLEGKSSLGRLGLLTHSTAGFIDPGFSGHITLELSNVANLPITLWPGMKIGQLCILRLTSPAEHPYGSTRVGSKYQGQRGPTPSRSYQNFITST.

DCTP is bound by residues 101-106 (KSSLGR), D119, 127-129 (TLE), Q148, Y162, and Q174. E129 (proton donor/acceptor) is an active-site residue. A disordered region spans residues 163-190 (GSTRVGSKYQGQRGPTPSRSYQNFITST). Polar residues predominate over residues 171-190 (YQGQRGPTPSRSYQNFITST).

This sequence belongs to the dCTP deaminase family. Homotrimer.

The enzyme catalyses dCTP + 2 H2O = dUMP + NH4(+) + diphosphate. The protein operates within pyrimidine metabolism; dUMP biosynthesis; dUMP from dCTP: step 1/1. Functionally, bifunctional enzyme that catalyzes both the deamination of dCTP to dUTP and the hydrolysis of dUTP to dUMP without releasing the toxic dUTP intermediate. The protein is dCTP deaminase, dUMP-forming of Mycobacterium avium (strain 104).